Reading from the N-terminus, the 165-residue chain is Cyclic pyranopterin monophosphate synthase (165 aa).

Residues 76 to 78 (LCH) and 114 to 115 (ME) each bind substrate. Asp129 is an active-site residue.

This sequence belongs to the MoaC family. As to quaternary structure, homohexamer; trimer of dimers.

It catalyses the reaction (8S)-3',8-cyclo-7,8-dihydroguanosine 5'-triphosphate = cyclic pyranopterin phosphate + diphosphate. It functions in the pathway cofactor biosynthesis; molybdopterin biosynthesis. In terms of biological role, catalyzes the conversion of (8S)-3',8-cyclo-7,8-dihydroguanosine 5'-triphosphate to cyclic pyranopterin monophosphate (cPMP). The protein is Cyclic pyranopterin monophosphate synthase of Brucella abortus (strain 2308).